The chain runs to 432 residues: Glutamate-1-semialdehyde 2,1-aminomutase (432 aa).

N6-(pyridoxal phosphate)lysine is present on Lys265.

This sequence belongs to the class-III pyridoxal-phosphate-dependent aminotransferase family. HemL subfamily. As to quaternary structure, homodimer. The cofactor is pyridoxal 5'-phosphate.

The protein resides in the cytoplasm. It carries out the reaction (S)-4-amino-5-oxopentanoate = 5-aminolevulinate. It participates in porphyrin-containing compound metabolism; protoporphyrin-IX biosynthesis; 5-aminolevulinate from L-glutamyl-tRNA(Glu): step 2/2. The chain is Glutamate-1-semialdehyde 2,1-aminomutase from Histophilus somni (strain 2336) (Haemophilus somnus).